Here is a 456-residue protein sequence, read N- to C-terminus: Glycine--tRNA ligase (456 aa).

Substrate contacts are provided by Arg98 and Glu168. Residues 200–202 (RNE), 210–215 (FRTREF), 285–286 (EL), and 329–332 (GVER) contribute to the ATP site. 215–219 (FEQME) is a binding site for substrate. 325–329 (EPSVG) serves as a coordination point for substrate.

This sequence belongs to the class-II aminoacyl-tRNA synthetase family. As to quaternary structure, homodimer.

The protein localises to the cytoplasm. The enzyme catalyses tRNA(Gly) + glycine + ATP = glycyl-tRNA(Gly) + AMP + diphosphate. Catalyzes the attachment of glycine to tRNA(Gly). This Mycoplasma capricolum subsp. capricolum (strain California kid / ATCC 27343 / NCTC 10154) protein is Glycine--tRNA ligase.